The sequence spans 244 residues: Uridylate kinase (244 aa).

An ATP-binding site is contributed by 15-18 (KLSG). The interval 23 to 28 (GSEGFG) is involved in allosteric activation by GTP. Gly57 contributes to the UMP binding site. Residues Gly58 and Arg62 each coordinate ATP. UMP-binding positions include Asp77 and 138 to 145 (TGNPFFTT). Residues Thr165, Phe171, and Asp174 each contribute to the ATP site.

Belongs to the UMP kinase family. As to quaternary structure, homohexamer.

It localises to the cytoplasm. It catalyses the reaction UMP + ATP = UDP + ADP. The protein operates within pyrimidine metabolism; CTP biosynthesis via de novo pathway; UDP from UMP (UMPK route): step 1/1. Its activity is regulated as follows. Allosterically activated by GTP. Inhibited by UTP. Its function is as follows. Catalyzes the reversible phosphorylation of UMP to UDP. The protein is Uridylate kinase of Aeromonas hydrophila subsp. hydrophila (strain ATCC 7966 / DSM 30187 / BCRC 13018 / CCUG 14551 / JCM 1027 / KCTC 2358 / NCIMB 9240 / NCTC 8049).